Consider the following 153-residue polypeptide: Prostaglandin E synthase (153 aa).

Residues 1–13 are Lumenal-facing; sequence MPPPVLALVSGQA. Residues 14-42 traverse the membrane as a helical segment; that stretch reads LPAFLLCSTLLVIKMYVVAVITGQVRLRK. Arg39 contributes to the glutathione binding site. At 43–61 the chain is on the cytoplasmic side; sequence KAFANPEDALRHGGLQYCR. A helical transmembrane segment spans residues 62 to 91; the sequence is SDQDVDRCLRAHRNDMETIYPFLFLGFVYS. 74–78 contributes to the glutathione binding site; that stretch reads RNDME. The Lumenal segment spans residues 92-96; that stretch reads FLGPD. A helical transmembrane segment spans residues 97–120; that stretch reads PFIAQMHFLVFFLGRMVHTVAYLG. Glutathione-binding residues include His114 and Tyr118. Topologically, residues 121 to 124 are cytoplasmic; the sequence is KLRA. A helical membrane pass occupies residues 125–153; that stretch reads PTRSLAYTVAQLPCASMALQIVWEAACHL. 127–131 contacts glutathione; sequence RSLAY.

It belongs to the MAPEG family. Homotrimer. The cofactor is glutathione.

The protein resides in the membrane. The protein localises to the cytoplasm. Its subcellular location is the perinuclear region. The catalysed reaction is prostaglandin H2 = prostaglandin E2. It carries out the reaction 2-glyceryl-prostaglandin H2 = 2-glyceryl-prostaglandin E2. It catalyses the reaction prostaglandin G2 = (15S)-15-hydroperoxy-prostaglandin E2. The enzyme catalyses 1-chloro-2,4-dinitrobenzene + glutathione = 2,4-dinitrophenyl-S-glutathione + chloride + H(+). The catalysed reaction is (5S)-hydroperoxy-(6E,8Z,11Z,14Z)-eicosatetraenoate + 2 glutathione = (5S)-hydroxy-(6E,8Z,11Z,14Z)-eicosatetraenoate + glutathione disulfide + H2O. It participates in lipid metabolism; prostaglandin biosynthesis. Terminal enzyme of the cyclooxygenase (COX)-2-mediated prostaglandin E2 (PGE2) biosynthetic pathway. Catalyzes the glutathione-dependent oxidoreduction of prostaglandin endoperoxide H2 (PGH2) to prostaglandin E2 (PGE2) in response to inflammatory stimuli. Plays a key role in inflammation response, fever and pain. Also catalyzes the oxidoreduction of endocannabinoids into prostaglandin glycerol esters and PGG2 into 15-hydroperoxy-PGE2. In addition, displays low glutathione transferase and glutathione-dependent peroxidase activities, toward 1-chloro-2,4-dinitrobenzene and 5-hydroperoxyicosatetraenoic acid (5-HPETE), respectively. The protein is Prostaglandin E synthase (PTGES) of Canis lupus familiaris (Dog).